The following is a 543-amino-acid chain: Aspartate/alanine antiporter (543 aa).

A run of 10 helical transmembrane segments spans residues 4 to 26, 33 to 55, 88 to 110, 117 to 139, 159 to 178, 362 to 381, 385 to 407, 428 to 450, 455 to 477, and 520 to 542; these read IGNF…GYLL, SFTL…LGVF, FGAK…AYAC, GPGI…GSSL, IPIV…LIFL, IINY…LGIV, VSGV…VQSI, SIGL…ISAI, ISVL…VICY, and VAPA…IVLL.

This sequence belongs to the AAE transporter (TC 2.A.81) family.

It localises to the cell membrane. Its function is as follows. Catalyzes the electrogenic exchange of aspartate with alanine. The protein is Aspartate/alanine antiporter (aspT) of Tetragenococcus halophilus (Pediococcus halophilus).